Reading from the N-terminus, the 523-residue chain is NAD(P)H-quinone oxidoreductase subunit 2 (523 aa).

The next 13 membrane-spanning stretches (helical) occupy residues 29-49, 57-77, 94-114, 128-148, 182-202, 223-243, 255-275, 291-311, 317-337, 345-365, 389-409, 424-444, and 477-497; these read AVAP…VDLA, WVPP…ALQW, LAIA…MISW, AGIL…TDLV, LLVG…LYGL, AALA…AVPF, PTPV…ALAL, LLFT…ALAQ, MLAY…VCGT, VLYT…IILF, LGLS…GFFG, VLVV…IGVI, and VALV…NPLF.

It belongs to the complex I subunit 2 family. As to quaternary structure, NDH-1 can be composed of about 15 different subunits; different subcomplexes with different compositions have been identified which probably have different functions.

Its subcellular location is the cellular thylakoid membrane. The catalysed reaction is a plastoquinone + NADH + (n+1) H(+)(in) = a plastoquinol + NAD(+) + n H(+)(out). It catalyses the reaction a plastoquinone + NADPH + (n+1) H(+)(in) = a plastoquinol + NADP(+) + n H(+)(out). Functionally, NDH-1 shuttles electrons from an unknown electron donor, via FMN and iron-sulfur (Fe-S) centers, to quinones in the respiratory and/or the photosynthetic chain. The immediate electron acceptor for the enzyme in this species is believed to be plastoquinone. Couples the redox reaction to proton translocation, and thus conserves the redox energy in a proton gradient. Cyanobacterial NDH-1 also plays a role in inorganic carbon-concentration. The sequence is that of NAD(P)H-quinone oxidoreductase subunit 2 from Synechococcus sp. (strain WH7803).